We begin with the raw amino-acid sequence, 151 residues long: UPF0178 protein VSAL_I0701 (151 aa).

This sequence belongs to the UPF0178 family.

This Aliivibrio salmonicida (strain LFI1238) (Vibrio salmonicida (strain LFI1238)) protein is UPF0178 protein VSAL_I0701.